The chain runs to 556 residues: Formate--tetrahydrofolate ligase 1 (556 aa).

ATP is bound at residue 65–72 (TPAGEGKS).

The protein belongs to the formate--tetrahydrofolate ligase family.

The enzyme catalyses (6S)-5,6,7,8-tetrahydrofolate + formate + ATP = (6R)-10-formyltetrahydrofolate + ADP + phosphate. It functions in the pathway one-carbon metabolism; tetrahydrofolate interconversion. This chain is Formate--tetrahydrofolate ligase 1, found in Streptococcus pyogenes serotype M18 (strain MGAS8232).